The following is a 158-amino-acid chain: 6,7-dimethyl-8-ribityllumazine synthase (158 aa).

Residues F23, 61-63, and 85-87 each bind 5-amino-6-(D-ribitylamino)uracil; these read SFE and AVI. 90 to 91 lines the (2S)-2-hydroxy-3-oxobutyl phosphate pocket; it reads ET. The active-site Proton donor is the H93. 5-amino-6-(D-ribitylamino)uracil is bound at residue F118. R132 contributes to the (2S)-2-hydroxy-3-oxobutyl phosphate binding site.

It belongs to the DMRL synthase family.

The enzyme catalyses (2S)-2-hydroxy-3-oxobutyl phosphate + 5-amino-6-(D-ribitylamino)uracil = 6,7-dimethyl-8-(1-D-ribityl)lumazine + phosphate + 2 H2O + H(+). It participates in cofactor biosynthesis; riboflavin biosynthesis; riboflavin from 2-hydroxy-3-oxobutyl phosphate and 5-amino-6-(D-ribitylamino)uracil: step 1/2. Its function is as follows. Catalyzes the formation of 6,7-dimethyl-8-ribityllumazine by condensation of 5-amino-6-(D-ribitylamino)uracil with 3,4-dihydroxy-2-butanone 4-phosphate. This is the penultimate step in the biosynthesis of riboflavin. This chain is 6,7-dimethyl-8-ribityllumazine synthase, found in Prochlorococcus marinus (strain MIT 9301).